Consider the following 315-residue polypeptide: Protoheme IX farnesyltransferase 1 (315 aa).

Helical transmembrane passes span 25–45 (PGII…AAKG), 49–69 (LALM…GCAV), 87–107 (RVTV…LALG), 120–139 (ALAL…VYSL), 145–165 (SVYG…VGYC), 176–196 (AILL…IAIF), 220–240 (LHIV…PLAG), 242–262 (TGIA…AMAL), and 280–300 (GFSI…SQVI).

It belongs to the UbiA prenyltransferase family. Protoheme IX farnesyltransferase subfamily.

It localises to the cell inner membrane. It catalyses the reaction heme b + (2E,6E)-farnesyl diphosphate + H2O = Fe(II)-heme o + diphosphate. Its pathway is porphyrin-containing compound metabolism; heme O biosynthesis; heme O from protoheme: step 1/1. Functionally, converts heme B (protoheme IX) to heme O by substitution of the vinyl group on carbon 2 of heme B porphyrin ring with a hydroxyethyl farnesyl side group. This is Protoheme IX farnesyltransferase 1 from Shewanella sp. (strain W3-18-1).